The primary structure comprises 554 residues: Glutamine--tRNA ligase (554 aa).

The 'HIGH' region signature appears at 34 to 44 (PEPNGYLHIGH). Residues 35–37 (EPN) and 41–47 (HIGHAKS) contribute to the ATP site. L-glutamine-binding residues include D67 and Y212. ATP is bound by residues T231, 261 to 262 (RL), and 269 to 271 (MSK). The 'KMSKS' region signature appears at 268–272 (VMSKR). The interaction with tRNA stretch occupies residues 317-324 (TKQDNTIE).

It belongs to the class-I aminoacyl-tRNA synthetase family. In terms of assembly, monomer.

Its subcellular location is the cytoplasm. The enzyme catalyses tRNA(Gln) + L-glutamine + ATP = L-glutaminyl-tRNA(Gln) + AMP + diphosphate. The polypeptide is Glutamine--tRNA ligase (Escherichia coli O17:K52:H18 (strain UMN026 / ExPEC)).